Reading from the N-terminus, the 352-residue chain is Biotin synthase (352 aa).

The 219-residue stretch at 44-262 (NRVQVSTLLS…LAVARILMPQ (219 aa)) folds into the Radical SAM core domain. [4Fe-4S] cluster is bound by residues Cys-59, Cys-63, and Cys-66. Cys-103, Cys-134, Cys-194, and Arg-266 together coordinate [2Fe-2S] cluster.

It belongs to the radical SAM superfamily. Biotin synthase family. Homodimer. [4Fe-4S] cluster serves as cofactor. Requires [2Fe-2S] cluster as cofactor.

It carries out the reaction (4R,5S)-dethiobiotin + (sulfur carrier)-SH + 2 reduced [2Fe-2S]-[ferredoxin] + 2 S-adenosyl-L-methionine = (sulfur carrier)-H + biotin + 2 5'-deoxyadenosine + 2 L-methionine + 2 oxidized [2Fe-2S]-[ferredoxin]. Its pathway is cofactor biosynthesis; biotin biosynthesis; biotin from 7,8-diaminononanoate: step 2/2. In terms of biological role, catalyzes the conversion of dethiobiotin (DTB) to biotin by the insertion of a sulfur atom into dethiobiotin via a radical-based mechanism. This Pseudomonas syringae pv. tomato (strain ATCC BAA-871 / DC3000) protein is Biotin synthase.